Here is a 213-residue protein sequence, read N- to C-terminus: 3-demethoxyubiquinol 3-hydroxylase (213 aa).

Residues Glu62, Glu92, His95, Glu144, Glu176, and His179 each coordinate Fe cation.

Belongs to the COQ7 family. Fe cation serves as cofactor.

It localises to the cell membrane. It carries out the reaction a 5-methoxy-2-methyl-3-(all-trans-polyprenyl)benzene-1,4-diol + AH2 + O2 = a 3-demethylubiquinol + A + H2O. It participates in cofactor biosynthesis; ubiquinone biosynthesis. In terms of biological role, catalyzes the hydroxylation of 2-nonaprenyl-3-methyl-6-methoxy-1,4-benzoquinol during ubiquinone biosynthesis. This chain is 3-demethoxyubiquinol 3-hydroxylase, found in Psychrobacter sp. (strain PRwf-1).